We begin with the raw amino-acid sequence, 267 residues long: Small ribosomal subunit protein uS2c (267 aa).

The tract at residues 237–267 (KQKIKKTGVKISGNRRTSSITKKRNPASSKI) is disordered. The span at 250–267 (NRRTSSITKKRNPASSKI) shows a compositional bias: polar residues.

It belongs to the universal ribosomal protein uS2 family.

The protein localises to the plastid. Its subcellular location is the chloroplast. This Chlorella vulgaris (Green alga) protein is Small ribosomal subunit protein uS2c (rps2).